The primary structure comprises 407 residues: Methylthioribose kinase (407 aa).

Residues N40, K57, and E111 to L113 contribute to the ATP site. D229 contributes to the substrate binding site. Residue D246 to E248 participates in ATP binding. R344 serves as a coordination point for substrate.

It belongs to the methylthioribose kinase family. Homodimer.

The catalysed reaction is 5-(methylsulfanyl)-D-ribose + ATP = 5-(methylsulfanyl)-alpha-D-ribose 1-phosphate + ADP + H(+). It functions in the pathway amino-acid biosynthesis; L-methionine biosynthesis via salvage pathway; S-methyl-5-thio-alpha-D-ribose 1-phosphate from S-methyl-5'-thioadenosine (hydrolase route): step 2/2. Functionally, catalyzes the phosphorylation of methylthioribose into methylthioribose-1-phosphate. This Yersinia pseudotuberculosis serotype O:3 (strain YPIII) protein is Methylthioribose kinase.